We begin with the raw amino-acid sequence, 430 residues long: Adenylosuccinate synthetase (430 aa).

GTP contacts are provided by residues 12 to 18 and 40 to 42; these read GDEGKGK and GHT. The active-site Proton acceptor is D13. Mg(2+)-binding residues include D13 and G40. IMP contacts are provided by residues 13-16, 38-41, T130, R144, Q224, T239, and R303; these read DEGK and NAGH. The Proton donor role is filled by H41. Substrate is bound at residue 299-305; that stretch reads VVTGRKR. Residues R305, 331-333, and 413-415 each bind GTP; these read KLD and STS.

The protein belongs to the adenylosuccinate synthetase family. Homodimer. Mg(2+) is required as a cofactor.

Its subcellular location is the cytoplasm. It carries out the reaction IMP + L-aspartate + GTP = N(6)-(1,2-dicarboxyethyl)-AMP + GDP + phosphate + 2 H(+). It functions in the pathway purine metabolism; AMP biosynthesis via de novo pathway; AMP from IMP: step 1/2. Functionally, plays an important role in the de novo pathway of purine nucleotide biosynthesis. Catalyzes the first committed step in the biosynthesis of AMP from IMP. This chain is Adenylosuccinate synthetase, found in Methylobacterium sp. (strain 4-46).